A 122-amino-acid chain; its full sequence is Acidic phospholipase A2 A' (122 aa).

Cystine bridges form between C26-C115, C28-C44, C43-C95, C49-C122, C50-C88, C57-C81, and C75-C86. Ca(2+) is bound by residues Y27, G29, and G31. Residue H47 is part of the active site. D48 is a binding site for Ca(2+). The active site involves D89.

This sequence belongs to the phospholipase A2 family. Group II subfamily. D49 sub-subfamily. It depends on Ca(2+) as a cofactor. Expressed by the venom gland.

It localises to the secreted. The enzyme catalyses a 1,2-diacyl-sn-glycero-3-phosphocholine + H2O = a 1-acyl-sn-glycero-3-phosphocholine + a fatty acid + H(+). Its function is as follows. PLA2 catalyzes the calcium-dependent hydrolysis of the 2-acyl groups in 3-sn-phosphoglycerides. This Gloydius halys (Chinese water mocassin) protein is Acidic phospholipase A2 A'.